Consider the following 514-residue polypeptide: Putative GTP-binding protein 6 (514 aa).

A disordered region spans residues 48–71; the sequence is WAGGGPVRGGGEEDPREDEEEEED. The segment covering 59 to 71 has biased composition (acidic residues); sequence EEDPREDEEEEED. One can recognise a Hflx-type G domain in the interval 285-449; that stretch reads PVVSVVGYTN…ALEASVLRAT (165 aa). Residues threonine 298 and threonine 319 each coordinate Mg(2+).

This sequence belongs to the TRAFAC class OBG-HflX-like GTPase superfamily. HflX GTPase family. Mg(2+) serves as cofactor.

The chain is Putative GTP-binding protein 6 (Gtpbp6) from Mus musculus (Mouse).